A 142-amino-acid polypeptide reads, in one-letter code: Phenylalanine ammonia-lyase (142 aa).

(E)-cinnamate is bound by residues Lys-66, Glu-94, and Asn-97.

It belongs to the PAL/histidase family. Homotetramer. Contains an active site 4-methylidene-imidazol-5-one (MIO), which is formed autocatalytically by cyclization and dehydration of residues Ala-Ser-Gly.

It localises to the cytoplasm. It carries out the reaction L-phenylalanine = (E)-cinnamate + NH4(+). It functions in the pathway phenylpropanoid metabolism; trans-cinnamate biosynthesis; trans-cinnamate from L-phenylalanine: step 1/1. In terms of biological role, catalyzes the non-oxidative deamination of L-phenylalanine to form trans-cinnamic acid and a free ammonium ion. Facilitates the commitment step in phenylpropanoid pathways that produce secondary metabolites such as lignins, coumarins and flavonoids. This chain is Phenylalanine ammonia-lyase (palA), found in Agaricus bisporus (White button mushroom).